Reading from the N-terminus, the 426-residue chain is Glutamyl-tRNA reductase (426 aa).

Residues 49–52, serine 101, 106–108, and glutamine 112 contribute to the substrate site; these read TCNR and EPQ. Cysteine 50 serves as the catalytic Nucleophile. Residue 181–186 coordinates NADP(+); that stretch reads GAGETI. A disordered region spans residues 405 to 426; the sequence is RLFPEKPGYQHPPHSYPDREDR.

Belongs to the glutamyl-tRNA reductase family. As to quaternary structure, homodimer.

It carries out the reaction (S)-4-amino-5-oxopentanoate + tRNA(Glu) + NADP(+) = L-glutamyl-tRNA(Glu) + NADPH + H(+). Its pathway is porphyrin-containing compound metabolism; protoporphyrin-IX biosynthesis; 5-aminolevulinate from L-glutamyl-tRNA(Glu): step 1/2. Functionally, catalyzes the NADPH-dependent reduction of glutamyl-tRNA(Glu) to glutamate 1-semialdehyde (GSA). The chain is Glutamyl-tRNA reductase from Xanthomonas axonopodis pv. citri (strain 306).